The sequence spans 364 residues: D-alanine--D-alanine ligase A (364 aa).

Positions 145–348 (KRLLRDAGLN…YTDLISRLIE (204 aa)) constitute an ATP-grasp domain. 175 to 230 (ESRLGLPLFVKPANQGSSVGVSKVANEAQYQQAVALAFEFDHKVVVEQGIKGREIE) provides a ligand contact to ATP. Mg(2+) is bound by residues D302, E315, and N317.

The protein belongs to the D-alanine--D-alanine ligase family. The cofactor is Mg(2+). It depends on Mn(2+) as a cofactor.

Its subcellular location is the cytoplasm. The enzyme catalyses 2 D-alanine + ATP = D-alanyl-D-alanine + ADP + phosphate + H(+). It participates in cell wall biogenesis; peptidoglycan biosynthesis. Cell wall formation. This is D-alanine--D-alanine ligase A (ddlA) from Salmonella typhi.